The sequence spans 395 residues: Elongation factor Tu (395 aa).

In terms of domain architecture, tr-type G spans 10–204; it reads KPHVNIGTIG…EVDAYIPTPE (195 aa). The G1 stretch occupies residues 19–26; that stretch reads GHVDHGKT. Position 19 to 26 (19 to 26) interacts with GTP; it reads GHVDHGKT. Residue Thr-26 coordinates Mg(2+). The tract at residues 60-64 is G2; sequence GITIS. A G3 region spans residues 81 to 84; it reads DCPG. GTP contacts are provided by residues 81-85 and 136-139; these read DCPGH and NKCD. Residues 136–139 are G4; that stretch reads NKCD. The interval 174–176 is G5; it reads SAL.

It belongs to the TRAFAC class translation factor GTPase superfamily. Classic translation factor GTPase family. EF-Tu/EF-1A subfamily. In terms of assembly, monomer.

Its subcellular location is the cytoplasm. The catalysed reaction is GTP + H2O = GDP + phosphate + H(+). Functionally, GTP hydrolase that promotes the GTP-dependent binding of aminoacyl-tRNA to the A-site of ribosomes during protein biosynthesis. The protein is Elongation factor Tu of Bacillus cereus (strain G9842).